The sequence spans 500 residues: NAD(P)H-quinone oxidoreductase chain 4, chloroplastic (500 aa).

14 helical membrane-spanning segments follow: residues 4-24 (FPWL…IFFL), 37-57 (ICIC…HFQL), 87-107 (IGPI…AWPV), 113-130 (LFHF…GLFS), 134-154 (LLLF…LLSM), 167-187 (FILY…GMGL), 211-231 (ILFY…IPLH), 242-262 (HYST…YGLV), 272-292 (AHSI…IYAA), 305-325 (IAYS…SITD), 330-350 (GAIL…FLAG), 386-406 (LALP…GIIT), 416-436 (ILIT…LLSM), and 462-482 (LFVS…PDFV).

The protein belongs to the complex I subunit 4 family.

Its subcellular location is the plastid. It is found in the chloroplast thylakoid membrane. The enzyme catalyses a plastoquinone + NADH + (n+1) H(+)(in) = a plastoquinol + NAD(+) + n H(+)(out). It carries out the reaction a plastoquinone + NADPH + (n+1) H(+)(in) = a plastoquinol + NADP(+) + n H(+)(out). The polypeptide is NAD(P)H-quinone oxidoreductase chain 4, chloroplastic (Acorus calamus var. americanus (American sweet flag)).